The primary structure comprises 533 residues: Methyl-accepting chemotaxis protein IV (533 aa).

Topologically, residues 1-6 (MFNRIR) are cytoplasmic. A helical membrane pass occupies residues 7-33 (ISTTLFLILILCGILQIGSNGMSFWAF). The Periplasmic segment spans residues 34–188 (RDDLQRLNQV…AQSQRNYQIS (155 aa)). Residues 189–209 (ALVFISMIIVAAIYISSALWW) form a helical membrane-spanning segment. Over 210–533 (TRKMIVQPLA…VQLQIAPVVS (324 aa)) the chain is Cytoplasmic. One can recognise an HAMP domain in the interval 212 to 264 (KMIVQPLAIIGSHFDSIAAGNLARPIAVYGRNEITAIFASLKTMQQALRGTVS). Residues 269-498 (GSQEMHIGIA…EAAVATEQLA (230 aa)) form the Methyl-accepting transducer domain. Glutamine 293, glutamine 300, and glutamine 307 each carry glutamate methyl ester (Gln). Residue glutamate 489 is modified to Glutamate methyl ester (Glu).

This sequence belongs to the methyl-accepting chemotaxis (MCP) protein family.

It localises to the cell inner membrane. Mediates taxis toward dipeptides via an interaction with the periplasmic dipeptide-binding protein. Functionally, chemotactic-signal transducers respond to changes in the concentration of attractants and repellents in the environment, transduce a signal from the outside to the inside of the cell, and facilitate sensory adaptation through the variation of the level of methylation. Attractants increase the level of methylation while repellents decrease the level of methylation, the methyl groups are added by the methyltransferase CheR and removed by the methylesterase CheB. The protein is Methyl-accepting chemotaxis protein IV (tap) of Escherichia coli (strain K12).